A 100-amino-acid polypeptide reads, in one-letter code: Vesicle-associated membrane protein 8 (100 aa).

Met1 carries the N-acetylmethionine modification. Residues 1–75 lie on the Cytoplasmic side of the membrane; the sequence is MEEASEGGGN…ARKFWWKNVK (75 aa). Ser5 and Ser18 each carry phosphoserine. One can recognise a v-SNARE coiled-coil homology domain in the interval 12–72; it reads RVRNLQSEVE…QKVARKFWWK (61 aa). Thr28, Thr48, and Thr54 each carry phosphothreonine. Ser55 carries the phosphoserine modification. 2 (Microbial infection) N6-stearoyl lysine lipidation sites follow: Lys64 and Lys68. The chain crosses the membrane as a helical; Anchor for type IV membrane protein span at residues 76–96; sequence MIVLICVIVFIIILFIVLFAT. At 97–100 the chain is on the vesicular side; it reads GAFS.

The protein belongs to the synaptobrevin family. Forms a SNARE complex composed of VAMP8, SNAP29 and STX17 involved in fusion of autophagosome with lysosome. Found in a number of SNARE complexes with NAPA, SNAP23, SNAP25, STX1A, STX4, STX7, STX8 and VTI1B. Interacts with PICALM. SNARE complex formation and binding by PICALM are mutually exclusive processes for VAMP8. Interacts with SBF2/MTMR13. Interacts with RAB21 (in GTP-bound form) in response to starvation; the interaction probably regulates VAMP8 endolysosomal trafficking. Interacts with STX17; this interaction is increased in the absence of TMEM39A. Interacts with TRIM6. In terms of assembly, (Microbial infection) The interaction with STX17 is decreased in presence of SARS coronavirus-2/SARS-CoV-2 ORF3A protein. Post-translationally, (Microbial infection) Stearoylated By S.flexneri N-epsilon-fatty acyltransferase IcsB, thereby disrupting the host actin cytoskeleton. As to expression, platelets.

The protein resides in the lysosome membrane. It localises to the early endosome membrane. Its subcellular location is the late endosome membrane. It is found in the cell membrane. The protein localises to the zymogen granule membrane. Its function is as follows. SNAREs, soluble N-ethylmaleimide-sensitive factor-attachment protein receptors, are essential proteins for fusion of cellular membranes. SNAREs localized on opposing membranes assemble to form a trans-SNARE complex, an extended, parallel four alpha-helical bundle that drives membrane fusion. VAMP8 is a SNARE involved in autophagy through the direct control of autophagosome membrane fusion with the lysososome membrane via its interaction with the STX17-SNAP29 binary t-SNARE complex. Also required for dense-granule secretion in platelets. Also plays a role in regulated enzyme secretion in pancreatic acinar cells. Involved in the abscission of the midbody during cell division, which leads to completely separate daughter cells. Involved in the homotypic fusion of early and late endosomes. Also participates in the activation of type I interferon antiviral response through a TRIM6-dependent mechanism. The sequence is that of Vesicle-associated membrane protein 8 from Homo sapiens (Human).